Reading from the N-terminus, the 403-residue chain is Rhomboid-like protein 15 (403 aa).

5 consecutive transmembrane segments (helical) span residues 22-42, 70-90, 103-123, 141-161, and 176-196; these read IPFL…ICLL, AIIF…LVPM, LLYL…LIAS, AIGF…LSGV, and LYPW…SLLG. The active-site Nucleophile is the serine 145. Histidine 197 acts as the Charge relay system in catalysis. The chain crosses the membrane as a helical span at residues 198 to 218; sequence LCGILSGFSYSYGLFNFLMPG. A disordered region spans residues 282-316; sequence EASNQSSEDSRFPGRGRTLSTARDPTAPAGETDPN. Positions 361–401 constitute a UBA domain; that stretch reads AASEEQIQKLVAMGFDRTQVEVALAAADDDLTVAVEILMSQ.

It belongs to the peptidase S54 family.

It is found in the membrane. Probable rhomboid-type serine protease that catalyzes intramembrane proteolysis. May function in senescence. This chain is Rhomboid-like protein 15, found in Arabidopsis thaliana (Mouse-ear cress).